Consider the following 473-residue polypeptide: Proton-coupled folate transporter (473 aa).

Pro residues predominate over residues 1 to 20 (MAAPSDPPTAATPPAPPPPA). A disordered region spans residues 1–21 (MAAPSDPPTAATPPAPPPPAR). Residues 1-29 (MAAPSDPPTAATPPAPPPPARRCLLAPSV) lie on the Cytoplasmic side of the membrane. Residues 30-48 (EPLLFLATLALGLQVPLAT) traverse the membrane as a helical segment. Over 49 to 90 (QYLWDRLGAERGYVGPNASSPHGCGNGSGAVDPLREEVEALV) the chain is Extracellular. N-linked (GlcNAc...) asparagine glycans are attached at residues N65 and N74. A disulfide bridge connects residues C72 and C306. A helical transmembrane segment spans residues 91–116 (AHWNLCINLGGFFVGLFSVTLFGPWS). N98 is a binding site for pemetrexed. Topologically, residues 117–120 (DSVG) are cytoplasmic. The helical transmembrane segment at 121 to 143 (RRPVLVLPAVGMAVQAAVYLLVM) threads the bilayer. Residues 144 to 148 (YLRLH) are Extracellular-facing. The helical transmembrane segment at 149-162 (VAYLLLGRIISGLL) threads the bilayer. The Cytoplasmic portion of the chain corresponds to 163-185 (GDYNLILAGCFASVADSSNQRTR). Positions 164 and 193 each coordinate H(+). Residues 186–211 (TFRVAILEACLGVAGMVASVGGGQWR) traverse the membrane as a helical segment. E193 contributes to the pemetrexed binding site. The Extracellular portion of the chain corresponds to 212 to 216 (KAEGY). Residues 217 to 235 (INPFWLVLAASLAAALYAA) form a helical membrane-spanning segment. Over 236-274 (LCLQETVKQRRAAKLLTLQHYKAVYKLYTAPEDLSSRRK) the chain is Cytoplasmic. Residues 275–297 (LALYSLAFFLLVTVHFGTKDLYV) traverse the membrane as a helical segment. H289 provides a ligand contact to H(+). Residues 298–310 (LYELGSPLCWASD) lie on the Extracellular side of the membrane. The helical transmembrane segment at 311-333 (LIGYGSAASYLAYLSSLGGLRLL) threads the bilayer. Residue Y323 participates in pemetrexed binding. Topologically, residues 334-339 (QLCLED) are cytoplasmic. A helical membrane pass occupies residues 340–359 (TWVAEIGLISNIAGLVVISL). Over 360-363 (ATTT) the chain is Extracellular. The helical transmembrane segment at 364-384 (PLMFTGYGIMFLSMAATPVIR) threads the bilayer. Over 385–396 (AKLSKLVGETEQ) the chain is Cytoplasmic. The helical transmembrane segment at 397 to 422 (GALFASVACVEGLCSLVATGVFNSLY) threads the bilayer. Residues E407 and S411 each coordinate pemetrexed. At 423–430 (PSTLHFMR) the chain is on the extracellular side. A helical transmembrane segment spans residues 431-449 (GFPFLFGAILLLIPAAIMG). Over 450–473 (WIEIQDSNLQYSHFSDASSSPADG) the chain is Cytoplasmic.

This sequence belongs to the major facilitator superfamily. SLC46A family. As to quaternary structure, monomer. As to expression, widely expressed, including brain, aorta, liver, kidney, spleen, small intestine, pancreas, ovary and testis.

It localises to the cell membrane. The protein resides in the apical cell membrane. Its subcellular location is the basolateral cell membrane. The protein localises to the endosome membrane. It is found in the cytoplasm. The catalysed reaction is folate(in) + H(+)(in) = folate(out) + H(+)(out). It catalyses the reaction (6S)-5-methyl-5,6,7,8-tetrahydrofolate(in) + H(+)(in) = (6S)-5-methyl-5,6,7,8-tetrahydrofolate(out) + H(+)(out). The enzyme catalyses methotrexate(in) + H(+)(in) = methotrexate(out) + H(+)(out). It carries out the reaction pemetrexed(in) + H(+)(in) = pemetrexed(out) + H(+)(out). Proton-coupled folate symporter that mediates folate absorption using an H(+) gradient as a driving force. Involved in the intestinal absorption of folates at the brush-border membrane of the proximal jejunum, and the transport from blood to cerebrospinal fluid across the choroid plexus. Functions at acidic pH via alternate outward- and inward-open conformation states. Protonation of residues in the outward open state primes the protein for transport. Binding of folate promotes breaking of salt bridge network and subsequent closure of the extracellular gate, leading to the inward-open state and release of protons and folate. Also able to transport antifolate drugs, such as methotrexate and pemetrexed. Also acts as a lower-affinity, pH-independent heme carrier protein and constitutes the main importer of heme in the intestine. Imports heme in the retina and retinal pigment epithelium, in neurons of the hippocampus, in hepatocytes and in the renal epithelial cells. The sequence is that of Proton-coupled folate transporter from Gallus gallus (Chicken).